The primary structure comprises 184 residues: UPF0397 protein SAOUHSC_03020 (184 aa).

The next 5 membrane-spanning stretches (helical) occupy residues 11-31 (VVAIGIGAAVFVILGRFVVIP), 44-64 (AFLALISAIFGPFAGLMTGLV), 77-97 (AWWSWVICSGIIGCLYGWIGL), 116-136 (IGQIIANIICWALIAPTLDIL), and 148-168 (QGVISAVLNIISVGIIGTILL).

It belongs to the UPF0397 family.

The protein resides in the cell membrane. This chain is UPF0397 protein SAOUHSC_03020, found in Staphylococcus aureus (strain NCTC 8325 / PS 47).